The chain runs to 416 residues: MDKLIIEGGYPLKGTVTVSGSKNAALPILIASILANKKVTLHNVPQLRDIRTTIKLLEILGCTIQQTEQCIELTPGTLQHEAPYELVCTMRASILVLGPLLAKLGKAKVAMPGGCAIGARPIDLHIKALEKMGAKFTLKDGYLIGDCTKLKGTHIYLDFPTVGGTENLLIAASIAEGETILENAAQEPEIEDLARFLIACGAIIKGHGTNVIHIQGVPSLNGCTYSIMPDRIEAGTFLTAAAITKGELLISGCPYKELEAIINKFMQMGIHIEKRECGIYVAPIKTLKATDVTTRPFPGFPTDMQAQIMALMSIAYGTSTVNETIFENRFMHVQELARMGANIRLNGHTAIVTGVKELKGAPVMASDLRASASLVLAGLAAKGITTIQRTYHLDRGYEFIEKKLNAVGASIQRTNE.

22–23 lines the phosphoenolpyruvate pocket; sequence KN. Residue R91 coordinates UDP-N-acetyl-alpha-D-glucosamine. The Proton donor role is filled by C115. C115 is subject to 2-(S-cysteinyl)pyruvic acid O-phosphothioketal. UDP-N-acetyl-alpha-D-glucosamine-binding positions include 120 to 124, D303, and I325; that span reads RPIDL.

Belongs to the EPSP synthase family. MurA subfamily.

Its subcellular location is the cytoplasm. The enzyme catalyses phosphoenolpyruvate + UDP-N-acetyl-alpha-D-glucosamine = UDP-N-acetyl-3-O-(1-carboxyvinyl)-alpha-D-glucosamine + phosphate. It functions in the pathway cell wall biogenesis; peptidoglycan biosynthesis. Its function is as follows. Cell wall formation. Adds enolpyruvyl to UDP-N-acetylglucosamine. This chain is UDP-N-acetylglucosamine 1-carboxyvinyltransferase, found in Lawsonia intracellularis (strain PHE/MN1-00).